The following is a 535-amino-acid chain: tRNA-2-methylthio-N(6)-dimethylallyladenosine synthase (535 aa).

Residues 24–139 (RTYEVRTFGC…LPRLLERARH (116 aa)) enclose the MTTase N-terminal domain. Cys-33, Cys-68, Cys-102, Cys-176, Cys-180, and Cys-183 together coordinate [4Fe-4S] cluster. The 231-residue stretch at 162-392 (RDSSFSGWVS…IALQERISLE (231 aa)) folds into the Radical SAM core domain. Residues 395–465 (EKLIGRDVEL…PHYLIADAAG (71 aa)) form the TRAM domain. The tract at residues 512-535 (RTREPLTSPGVGTMPLYDPTDGQR) is disordered.

Belongs to the methylthiotransferase family. MiaB subfamily. In terms of assembly, monomer. [4Fe-4S] cluster serves as cofactor.

The protein localises to the cytoplasm. The enzyme catalyses N(6)-dimethylallyladenosine(37) in tRNA + (sulfur carrier)-SH + AH2 + 2 S-adenosyl-L-methionine = 2-methylsulfanyl-N(6)-dimethylallyladenosine(37) in tRNA + (sulfur carrier)-H + 5'-deoxyadenosine + L-methionine + A + S-adenosyl-L-homocysteine + 2 H(+). Its function is as follows. Catalyzes the methylthiolation of N6-(dimethylallyl)adenosine (i(6)A), leading to the formation of 2-methylthio-N6-(dimethylallyl)adenosine (ms(2)i(6)A) at position 37 in tRNAs that read codons beginning with uridine. In Leifsonia xyli subsp. xyli (strain CTCB07), this protein is tRNA-2-methylthio-N(6)-dimethylallyladenosine synthase.